The sequence spans 359 residues: Uracil-DNA glycosylase (359 aa).

The N-terminal 21 residues, 1–21 (MWCMRRLPTNSVMTVARKRKQ), are a transit peptide targeting the mitochondrion. Catalysis depends on aspartate 162, which acts as the Proton acceptor.

It belongs to the uracil-DNA glycosylase (UDG) superfamily. UNG family.

The protein resides in the mitochondrion. Its subcellular location is the nucleus. The enzyme catalyses Hydrolyzes single-stranded DNA or mismatched double-stranded DNA and polynucleotides, releasing free uracil.. In terms of biological role, excises uracil residues from the DNA which can arise as a result of misincorporation of dUMP residues by DNA polymerase or due to deamination of cytosine. Not involved in strand-directed mismatch repair. The chain is Uracil-DNA glycosylase from Saccharomyces cerevisiae (strain ATCC 204508 / S288c) (Baker's yeast).